The chain runs to 651 residues: Intraflagellar transport protein 70A (651 aa).

TPR repeat units follow at residues Asp-8–Ser-41, Arg-42–Val-75, Pro-140–Lys-173, Asp-175–Glu-207, Leu-372–Thr-405, Ile-410–His-443, and Ile-445–Asn-478. A coiled-coil region spans residues Tyr-494–Asn-521. A TPR 8 repeat occupies Cys-530–Lys-563.

The protein belongs to the TTC30/dfy-1/fleer family.

It is found in the cell projection. The protein localises to the cilium. Functionally, required for polyglutamylation of axonemal tubulin. Plays a role in anterograde intraflagellar transport (IFT), the process by which cilia precursors are transported from the base of the cilium to the site of their incorporation at the tip. This Xenopus tropicalis (Western clawed frog) protein is Intraflagellar transport protein 70A (ift70a).